The sequence spans 310 residues: METQNHTTVTEFILLGLTESSTLRVILFMVFLGIYTVTLVGNFSIISLIRSCPQLHTPMYLFLSHLAFVDIGFSTSITPTMFKGFLGNRLVLSVAACIAQFCITVTFGTVECFLLAVMAYDRYVAICSPLLYSTHMSPRICFLLVGASYVGGCVNSGAFTSCLSILSFCGPNQIDHFFCDFPAVLKLSCSDVSIIGIIPSISAGSIIVITVFVIAVSYAYILITILKMRSTEGRQKAFSTCTSHLTAVTLYYGTITFIYVMPKSNYSTAQNKILSVFYTVVIPMLNPLIYSLRNRDVKEALRKAIIRIFP.

Topologically, residues 1-25 are extracellular; it reads METQNHTTVTEFILLGLTESSTLRV. N-linked (GlcNAc...) asparagine glycosylation is present at Asn-5. A helical transmembrane segment spans residues 26–46; the sequence is ILFMVFLGIYTVTLVGNFSII. Residues 47-54 lie on the Cytoplasmic side of the membrane; sequence SLIRSCPQ. Residues 55–75 traverse the membrane as a helical segment; that stretch reads LHTPMYLFLSHLAFVDIGFST. Over 76-99 the chain is Extracellular; that stretch reads SITPTMFKGFLGNRLVLSVAACIA. An intrachain disulfide couples Cys-97 to Cys-189. A helical membrane pass occupies residues 100–120; that stretch reads QFCITVTFGTVECFLLAVMAY. Residues 121-133 lie on the Cytoplasmic side of the membrane; that stretch reads DRYVAICSPLLYS. Residues 134–154 traverse the membrane as a helical segment; it reads THMSPRICFLLVGASYVGGCV. Topologically, residues 155–196 are extracellular; the sequence is NSGAFTSCLSILSFCGPNQIDHFFCDFPAVLKLSCSDVSIIG. Residues 197–217 form a helical membrane-spanning segment; sequence IIPSISAGSIIVITVFVIAVS. The Cytoplasmic portion of the chain corresponds to 218 to 237; sequence YAYILITILKMRSTEGRQKA. Residues 238 to 258 traverse the membrane as a helical segment; sequence FSTCTSHLTAVTLYYGTITFI. Residues 259–271 lie on the Extracellular side of the membrane; the sequence is YVMPKSNYSTAQN. N-linked (GlcNAc...) asparagine glycosylation occurs at Asn-265. Residues 272–292 traverse the membrane as a helical segment; sequence KILSVFYTVVIPMLNPLIYSL. Over 293–310 the chain is Cytoplasmic; that stretch reads RNRDVKEALRKAIIRIFP.

This sequence belongs to the G-protein coupled receptor 1 family.

Its subcellular location is the cell membrane. Potential odorant receptor. In Mus musculus (Mouse), this protein is Olfactory receptor 5P55.